The primary structure comprises 477 residues: Leukotoxin export protein LtxD (477 aa).

Residues 64 to 84 (IMLFLTLAIIVSIFSNVEIIA) form a helical membrane-spanning segment. Positions 206–287 (LNLNKKEAEK…ENEVLLAKEE (82 aa)) form a coiled coil.

Belongs to the membrane fusion protein (MFP) (TC 8.A.1) family. Probably part of a complex composed of LtxB, LtxD and TdeA, which forms a single transport channel across the two membranes.

It is found in the cell inner membrane. Involved in the export of the LtxA leukotoxin. The sequence is that of Leukotoxin export protein LtxD from Aggregatibacter actinomycetemcomitans (Actinobacillus actinomycetemcomitans).